The primary structure comprises 484 residues: tRNA sulfurtransferase (484 aa).

Residues 63 to 167 (REMIERLTCT…DQRLYVIHNQ (105 aa)) form the THUMP domain. Residues 185 to 186 (LM), Lys-267, Gly-289, and Gln-298 each bind ATP. Cys-346 and Cys-457 are joined by a disulfide. The Rhodanese domain occupies 405–483 (ALPGQIVIDI…GHANVRVYRP (79 aa)). Cys-457 acts as the Cysteine persulfide intermediate in catalysis.

It belongs to the ThiI family.

Its subcellular location is the cytoplasm. The enzyme catalyses [ThiI sulfur-carrier protein]-S-sulfanyl-L-cysteine + a uridine in tRNA + 2 reduced [2Fe-2S]-[ferredoxin] + ATP + H(+) = [ThiI sulfur-carrier protein]-L-cysteine + a 4-thiouridine in tRNA + 2 oxidized [2Fe-2S]-[ferredoxin] + AMP + diphosphate. The catalysed reaction is [ThiS sulfur-carrier protein]-C-terminal Gly-Gly-AMP + S-sulfanyl-L-cysteinyl-[cysteine desulfurase] + AH2 = [ThiS sulfur-carrier protein]-C-terminal-Gly-aminoethanethioate + L-cysteinyl-[cysteine desulfurase] + A + AMP + 2 H(+). Its pathway is cofactor biosynthesis; thiamine diphosphate biosynthesis. Catalyzes the ATP-dependent transfer of a sulfur to tRNA to produce 4-thiouridine in position 8 of tRNAs, which functions as a near-UV photosensor. Also catalyzes the transfer of sulfur to the sulfur carrier protein ThiS, forming ThiS-thiocarboxylate. This is a step in the synthesis of thiazole, in the thiamine biosynthesis pathway. The sulfur is donated as persulfide by IscS. The chain is tRNA sulfurtransferase from Pseudomonas putida (strain ATCC 47054 / DSM 6125 / CFBP 8728 / NCIMB 11950 / KT2440).